We begin with the raw amino-acid sequence, 118 residues long: MPITTPKQKTTQRIKMRIHKGDTVQVITGKDKGKTGEVLRTLPIENRVIVQGVNIRTRHVKPTQEGESGRIVTEEASVHASNVMLYSNNKKIASRVALVVEKDGSKKRRLKKTGELID.

This sequence belongs to the universal ribosomal protein uL24 family. As to quaternary structure, part of the 50S ribosomal subunit.

Its function is as follows. One of two assembly initiator proteins, it binds directly to the 5'-end of the 23S rRNA, where it nucleates assembly of the 50S subunit. Functionally, one of the proteins that surrounds the polypeptide exit tunnel on the outside of the subunit. This chain is Large ribosomal subunit protein uL24, found in Prochlorococcus marinus (strain MIT 9303).